The sequence spans 179 residues: Large ribosomal subunit protein uL5 (179 aa).

It belongs to the universal ribosomal protein uL5 family. In terms of assembly, part of the 50S ribosomal subunit; part of the 5S rRNA/L5/L18/L25 subcomplex. Contacts the 5S rRNA and the P site tRNA. Forms a bridge to the 30S subunit in the 70S ribosome.

Its function is as follows. This is one of the proteins that bind and probably mediate the attachment of the 5S RNA into the large ribosomal subunit, where it forms part of the central protuberance. In the 70S ribosome it contacts protein S13 of the 30S subunit (bridge B1b), connecting the 2 subunits; this bridge is implicated in subunit movement. Contacts the P site tRNA; the 5S rRNA and some of its associated proteins might help stabilize positioning of ribosome-bound tRNAs. The polypeptide is Large ribosomal subunit protein uL5 (Desulfovibrio desulfuricans (strain ATCC 27774 / DSM 6949 / MB)).